The following is a 270-amino-acid chain: Shikimate dehydrogenase (NADP(+)) (270 aa).

Residues 15–17 (SLS) and T62 contribute to the shikimate site. Residue K66 is the Proton acceptor of the active site. N87 and D102 together coordinate shikimate. NADP(+) is bound by residues 126-130 (GAGGS), 149-154 (NRTVGR), and I210. A shikimate-binding site is contributed by Y212. G233 provides a ligand contact to NADP(+).

Belongs to the shikimate dehydrogenase family. In terms of assembly, homodimer.

It catalyses the reaction shikimate + NADP(+) = 3-dehydroshikimate + NADPH + H(+). Its pathway is metabolic intermediate biosynthesis; chorismate biosynthesis; chorismate from D-erythrose 4-phosphate and phosphoenolpyruvate: step 4/7. Functionally, involved in the biosynthesis of the chorismate, which leads to the biosynthesis of aromatic amino acids. Catalyzes the reversible NADPH linked reduction of 3-dehydroshikimate (DHSA) to yield shikimate (SA). This is Shikimate dehydrogenase (NADP(+)) from Hyphomonas neptunium (strain ATCC 15444).